A 67-amino-acid chain; its full sequence is Conotoxin LeDr192 (67 aa).

A signal peptide spans 1–19 (MRCFPVFIILLLLIASAPC). A propeptide spanning residues 20 to 49 (FDARTKTDDDVPLSPLRDNLKRTIRTRLNI) is cleaved from the precursor. Threonine amide is present on threonine 65.

This sequence belongs to the conotoxin T superfamily. In terms of processing, contains 2 disulfide bonds that can be either 'C1-C3, C2-C4' or 'C1-C4, C2-C3', since these disulfide connectivities have been observed for conotoxins with cysteine framework V (for examples, see AC P0DQQ7 and AC P81755). Expressed by the venom duct.

Its subcellular location is the secreted. This is Conotoxin LeDr192 from Conus litteratus (Lettered cone).